Reading from the N-terminus, the 247-residue chain is 5-oxoprolinase subunit A (247 aa).

Belongs to the LamB/PxpA family. In terms of assembly, forms a complex composed of PxpA, PxpB and PxpC.

The catalysed reaction is 5-oxo-L-proline + ATP + 2 H2O = L-glutamate + ADP + phosphate + H(+). Functionally, catalyzes the cleavage of 5-oxoproline to form L-glutamate coupled to the hydrolysis of ATP to ADP and inorganic phosphate. The chain is 5-oxoprolinase subunit A from Vibrio vulnificus (strain CMCP6).